We begin with the raw amino-acid sequence, 437 residues long: ATP-dependent protease ATPase subunit HslU (437 aa).

Residues valine 18, 60 to 65, aspartate 250, glutamate 315, and arginine 387 contribute to the ATP site; that span reads GCGKTE.

The protein belongs to the ClpX chaperone family. HslU subfamily. A double ring-shaped homohexamer of HslV is capped on each side by a ring-shaped HslU homohexamer. The assembly of the HslU/HslV complex is dependent on binding of ATP.

The protein resides in the cytoplasm. Functionally, ATPase subunit of a proteasome-like degradation complex; this subunit has chaperone activity. The binding of ATP and its subsequent hydrolysis by HslU are essential for unfolding of protein substrates subsequently hydrolyzed by HslV. HslU recognizes the N-terminal part of its protein substrates and unfolds these before they are guided to HslV for hydrolysis. The chain is ATP-dependent protease ATPase subunit HslU from Methylobacterium sp. (strain 4-46).